The chain runs to 427 residues: Putative ABC transporter substrate-binding protein YesO (427 aa).

This sequence belongs to the bacterial solute-binding protein 1 family.

In terms of biological role, may play a role in the degradation of type I rhamnogalacturonan derived from plant cell walls. In Bacillus subtilis (strain 168), this protein is Putative ABC transporter substrate-binding protein YesO (yesO).